Here is a 479-residue protein sequence, read N- to C-terminus: Glycogen synthase (479 aa).

Position 15 (lysine 15) interacts with ADP-alpha-D-glucose.

Belongs to the glycosyltransferase 1 family. Bacterial/plant glycogen synthase subfamily.

It carries out the reaction [(1-&gt;4)-alpha-D-glucosyl](n) + ADP-alpha-D-glucose = [(1-&gt;4)-alpha-D-glucosyl](n+1) + ADP + H(+). Its pathway is glycan biosynthesis; glycogen biosynthesis. Synthesizes alpha-1,4-glucan chains using ADP-glucose. The sequence is that of Glycogen synthase from Acidiphilium cryptum (strain JF-5).